A 466-amino-acid chain; its full sequence is 3-isopropylmalate dehydratase large subunit (466 aa).

3 residues coordinate [4Fe-4S] cluster: C347, C407, and C410.

Belongs to the aconitase/IPM isomerase family. LeuC type 1 subfamily. In terms of assembly, heterodimer of LeuC and LeuD. [4Fe-4S] cluster is required as a cofactor.

It catalyses the reaction (2R,3S)-3-isopropylmalate = (2S)-2-isopropylmalate. It participates in amino-acid biosynthesis; L-leucine biosynthesis; L-leucine from 3-methyl-2-oxobutanoate: step 2/4. Catalyzes the isomerization between 2-isopropylmalate and 3-isopropylmalate, via the formation of 2-isopropylmaleate. This is 3-isopropylmalate dehydratase large subunit from Escherichia coli O45:K1 (strain S88 / ExPEC).